Here is a 170-residue protein sequence, read N- to C-terminus: MAAQTQRAVLAGGCFWGMEDLIRRLPGVTATRVGYTGGDVPNATYRNHGTHAEAIEILFDPARTDFRAILEFFFQIHDPSTKNRQGNDIGLSYRSAIYYVDDEQKRIAEDTIADVDASGLWPGKVVTEVEPVGPFWEAEPEHQDYLERYPDGYTCHFPRPGWRLPARAEG.

Residue cysteine 14 is part of the active site.

This sequence belongs to the MsrA Met sulfoxide reductase family.

It catalyses the reaction L-methionyl-[protein] + [thioredoxin]-disulfide + H2O = L-methionyl-(S)-S-oxide-[protein] + [thioredoxin]-dithiol. The enzyme catalyses [thioredoxin]-disulfide + L-methionine + H2O = L-methionine (S)-S-oxide + [thioredoxin]-dithiol. Its function is as follows. Has an important function as a repair enzyme for proteins that have been inactivated by oxidation. Catalyzes the reversible oxidation-reduction of methionine sulfoxide in proteins to methionine. In Streptomyces avermitilis (strain ATCC 31267 / DSM 46492 / JCM 5070 / NBRC 14893 / NCIMB 12804 / NRRL 8165 / MA-4680), this protein is Peptide methionine sulfoxide reductase MsrA.